A 420-amino-acid chain; its full sequence is Gamma-glutamyl phosphate reductase (420 aa).

The protein belongs to the gamma-glutamyl phosphate reductase family.

The protein localises to the cytoplasm. The enzyme catalyses L-glutamate 5-semialdehyde + phosphate + NADP(+) = L-glutamyl 5-phosphate + NADPH + H(+). Its pathway is amino-acid biosynthesis; L-proline biosynthesis; L-glutamate 5-semialdehyde from L-glutamate: step 2/2. In terms of biological role, catalyzes the NADPH-dependent reduction of L-glutamate 5-phosphate into L-glutamate 5-semialdehyde and phosphate. The product spontaneously undergoes cyclization to form 1-pyrroline-5-carboxylate. This Streptococcus pneumoniae (strain Hungary19A-6) protein is Gamma-glutamyl phosphate reductase.